A 201-amino-acid chain; its full sequence is Receptor expression-enhancing protein 1 (201 aa).

A run of 2 helical transmembrane segments spans residues 1–21 and 35–55; these read MVSW…YPAY and YVKW…ETFT. Ser152 is modified (phosphoserine). Residues 158-201 form a disordered region; that stretch reads TIRGDGAPAPSGPPPPGTGRSSGKHSQPKMSRSASESAGSSGTA. Residues 188–201 are compositionally biased toward low complexity; the sequence is SRSASESAGSSGTA.

The protein belongs to the DP1 family. As to quaternary structure, interacts with OLFR992. Interacts with SPAST and ATL1. Interacts (via C-terminus) with microtubules. Interacts with ZFYVE27. As to expression, detected in olfactory sensory neurons of the olfactory epithelium, and in total brain.

The protein resides in the membrane. It is found in the mitochondrion membrane. The protein localises to the endoplasmic reticulum. Required for endoplasmic reticulum (ER) network formation, shaping and remodeling; it links ER tubules to the cytoskeleton. May also enhance the cell surface expression of odorant receptors. This is Receptor expression-enhancing protein 1 (Reep1) from Mus musculus (Mouse).